Consider the following 65-residue polypeptide: Large ribosomal subunit protein bL28 (65 aa).

Positions 1–21 are disordered; it reads MPGRDQLTGQKALSGNKRSHA.

It belongs to the bacterial ribosomal protein bL28 family.

The polypeptide is Large ribosomal subunit protein bL28 (Metamycoplasma arthritidis (strain 158L3-1) (Mycoplasma arthritidis)).